The chain runs to 467 residues: Cysteine--tRNA ligase (467 aa).

Cys-28 serves as a coordination point for Zn(2+). The short motif at 30-40 (ITAYDYSHIGH) is the 'HIGH' region element. Positions 211, 236, and 240 each coordinate Zn(2+). The 'KMSKS' region signature appears at 268–272 (KMSKS). ATP is bound at residue Lys-271.

It belongs to the class-I aminoacyl-tRNA synthetase family. It depends on Zn(2+) as a cofactor.

The protein localises to the cytoplasm. It catalyses the reaction tRNA(Cys) + L-cysteine + ATP = L-cysteinyl-tRNA(Cys) + AMP + diphosphate. The sequence is that of Cysteine--tRNA ligase (cysS) from Archaeoglobus fulgidus (strain ATCC 49558 / DSM 4304 / JCM 9628 / NBRC 100126 / VC-16).